A 47-amino-acid polypeptide reads, in one-letter code: Large ribosomal subunit protein bL34 (47 aa).

It belongs to the bacterial ribosomal protein bL34 family.

This chain is Large ribosomal subunit protein bL34, found in Mycobacterium ulcerans (strain Agy99).